We begin with the raw amino-acid sequence, 285 residues long: Pseudouridine-5'-phosphate glycosidase (285 aa).

The active-site Proton donor is the Glu-17. Residues Lys-77 and Val-97 each coordinate substrate. Asp-126 contributes to the Mn(2+) binding site. 128-130 (SQD) lines the substrate pocket. Lys-147 functions as the Nucleophile in the catalytic mechanism.

The protein belongs to the pseudouridine-5'-phosphate glycosidase family. Homotrimer. Mn(2+) serves as cofactor.

It catalyses the reaction D-ribose 5-phosphate + uracil = psi-UMP + H2O. Functionally, catalyzes the reversible cleavage of pseudouridine 5'-phosphate (PsiMP) to ribose 5-phosphate and uracil. Functions biologically in the cleavage direction, as part of a pseudouridine degradation pathway. The sequence is that of Pseudouridine-5'-phosphate glycosidase from Thermotoga sp. (strain RQ2).